The primary structure comprises 106 residues: MPQGGTPCRRARRAVRPERPTSPEGVFCVGGGAPGGPPDTTNTVSAEGANKHSKRYLLSESLLSAGIVRGKLTELNIQSELGHISDRLFWLGEAECNAVVPDFRSR.

Residues 1 to 46 are disordered; it reads MPQGGTPCRRARRAVRPERPTSPEGVFCVGGGAPGGPPDTTNTVSA.

This is an uncharacterized protein from Gracula (BFDV).